The sequence spans 445 residues: Phosphoglucosamine mutase (445 aa).

Ser102 acts as the Phosphoserine intermediate in catalysis. 4 residues coordinate Mg(2+): Ser102, Asp241, Asp243, and Asp245. Ser102 carries the phosphoserine modification.

Belongs to the phosphohexose mutase family. Mg(2+) is required as a cofactor. In terms of processing, activated by phosphorylation.

The enzyme catalyses alpha-D-glucosamine 1-phosphate = D-glucosamine 6-phosphate. Catalyzes the conversion of glucosamine-6-phosphate to glucosamine-1-phosphate. This Photorhabdus laumondii subsp. laumondii (strain DSM 15139 / CIP 105565 / TT01) (Photorhabdus luminescens subsp. laumondii) protein is Phosphoglucosamine mutase.